The sequence spans 230 residues: Ribosomal RNA small subunit methyltransferase G (230 aa).

S-adenosyl-L-methionine contacts are provided by residues glycine 93, leucine 98, 144 to 145 (IE), and arginine 158.

The protein belongs to the methyltransferase superfamily. RNA methyltransferase RsmG family.

It localises to the cytoplasm. It carries out the reaction guanosine(527) in 16S rRNA + S-adenosyl-L-methionine = N(7)-methylguanosine(527) in 16S rRNA + S-adenosyl-L-homocysteine. In terms of biological role, specifically methylates the N7 position of guanine in position 527 of 16S rRNA. The protein is Ribosomal RNA small subunit methyltransferase G of Bordetella parapertussis (strain 12822 / ATCC BAA-587 / NCTC 13253).